Here is a 339-residue protein sequence, read N- to C-terminus: Ferrochelatase (339 aa).

2 residues coordinate Fe cation: histidine 209 and glutamate 290.

It belongs to the ferrochelatase family.

Its subcellular location is the cytoplasm. It catalyses the reaction heme b + 2 H(+) = protoporphyrin IX + Fe(2+). It participates in porphyrin-containing compound metabolism; protoheme biosynthesis; protoheme from protoporphyrin-IX: step 1/1. Its function is as follows. Catalyzes the ferrous insertion into protoporphyrin IX. This chain is Ferrochelatase, found in Rhizobium meliloti (strain 1021) (Ensifer meliloti).